Reading from the N-terminus, the 526-residue chain is Dye-decolorizing peroxidase (526 aa).

The first 21 residues, 1–21 (MRKSISTFILLSVLSVGQLVA), serve as a signal peptide directing secretion. The propeptide occupies 22-63 (ARPRSTNAPPRRRTPQPRRTTSLFINPPALPDLPTVQAVDKL). Asn-186 is a glycosylation site (N-linked (GlcNAc...) asparagine). The active-site Proton acceptor is Asp-231. Asn-367 carries an N-linked (GlcNAc...) asparagine glycan. His-376 contacts heme. N-linked (GlcNAc...) asparagine glycans are attached at residues Asn-473 and Asn-484.

The protein belongs to the DyP-type peroxidase family. Heme b serves as cofactor.

The protein localises to the secreted. The enzyme catalyses Reactive Blue 5 + 2 H2O2 = 2,2'-disulfonyl azobenzene + 3-[(4-amino-6-chloro-1,3,5-triazin-2-yl)amino]benzenesulfonate + phthalate + 2 H2O + 2 H(+). It carries out the reaction 2 a phenolic donor + H2O2 = 2 a phenolic radical donor + 2 H2O. Functionally, manganese-independent peroxidase that is able to convert a large number of compounds, but its physiological substrate is not known. In addition to classic peroxidase substrates (e.g. 2,6-dimethoxyphenol), oxidizes dyes such as Reactive Blue 5 and Reactive Black 5. In Mycena epipterygia (Yellow-stemmed mycena), this protein is Dye-decolorizing peroxidase.